The following is a 165-amino-acid chain: Endoribonuclease YbeY (165 aa).

The Zn(2+) site is built by His131, His135, and His141.

Belongs to the endoribonuclease YbeY family. The cofactor is Zn(2+).

Its subcellular location is the cytoplasm. In terms of biological role, single strand-specific metallo-endoribonuclease involved in late-stage 70S ribosome quality control and in maturation of the 3' terminus of the 16S rRNA. This is Endoribonuclease YbeY from Agathobacter rectalis (strain ATCC 33656 / DSM 3377 / JCM 17463 / KCTC 5835 / VPI 0990) (Eubacterium rectale).